A 179-amino-acid chain; its full sequence is ATP synthase subunit delta (179 aa).

This sequence belongs to the ATPase delta chain family. F-type ATPases have 2 components, F(1) - the catalytic core - and F(0) - the membrane proton channel. F(1) has five subunits: alpha(3), beta(3), gamma(1), delta(1), epsilon(1). F(0) has three main subunits: a(1), b(2) and c(10-14). The alpha and beta chains form an alternating ring which encloses part of the gamma chain. F(1) is attached to F(0) by a central stalk formed by the gamma and epsilon chains, while a peripheral stalk is formed by the delta and b chains.

Its subcellular location is the cell membrane. Functionally, f(1)F(0) ATP synthase produces ATP from ADP in the presence of a proton or sodium gradient. F-type ATPases consist of two structural domains, F(1) containing the extramembraneous catalytic core and F(0) containing the membrane proton channel, linked together by a central stalk and a peripheral stalk. During catalysis, ATP synthesis in the catalytic domain of F(1) is coupled via a rotary mechanism of the central stalk subunits to proton translocation. In terms of biological role, this protein is part of the stalk that links CF(0) to CF(1). It either transmits conformational changes from CF(0) to CF(1) or is implicated in proton conduction. The sequence is that of ATP synthase subunit delta from Bacillus sp. (strain PS3).